The primary structure comprises 132 residues: UPF0299 membrane protein YohJ (132 aa).

A run of 4 helical transmembrane segments spans residues 7–27 (IIWQ…AGIF), 31–51 (LLPV…VLLA), 63–83 (GCYV…VGVM), and 93–113 (FGPV…VMSW).

Belongs to the UPF0299 family.

It localises to the cell inner membrane. The polypeptide is UPF0299 membrane protein YohJ (Shigella dysenteriae serotype 1 (strain Sd197)).